A 347-amino-acid polypeptide reads, in one-letter code: Oocyte-specific homeobox protein 6 (347 aa).

Disordered regions lie at residues M1–F20 and P54–Q86. The span at Q72 to M85 shows a compositional bias: polar residues. Positions H145–S204 form a DNA-binding region, homeobox.

Belongs to the paired homeobox family. Obox subfamily. Specifically expressed in early embryos.

It localises to the nucleus. Its function is as follows. Transcription factor required for zygotic genome activation (ZGA), a critical event in early embryonic development during which the developmental control passes from maternally provided mRNAs to the expression of the zygotic genome after fertilization. This chain is Oocyte-specific homeobox protein 6, found in Mus musculus (Mouse).